A 710-amino-acid chain; its full sequence is E3 ubiquitin-protein ligase TRIM9 (710 aa).

Residues 10 to 50 (CPVCGSFYREPIILPCSHNLCQACARNILVQTPESESPQSH) form an RING-type zinc finger. Phosphothreonine is present on Thr-41. 3 positions are modified to phosphoserine: Ser-44, Ser-46, and Ser-49. 2 B box-type zinc fingers span residues 163–212 (AAAL…LVPP) and 224–266 (RKVS…VKAL). The Zn(2+) site is built by Cys-168, Cys-171, Cys-193, His-198, Cys-229, His-232, Cys-252, and His-258. Residues 273–340 (HKSQLSQALN…KAQLLARVNK (68 aa)) are a coiled coil. A COS domain is found at 374-432 (IKENDPSGFLQISDALIRRVHLTEDQWGKGTLTPRMTTDFDLSLDNSPLLQSIHQLDFV). One can recognise a Fibronectin type-III domain in the interval 440 to 535 (VPATPILQLE…KTLVLQTSEV (96 aa)). One can recognise a B30.2/SPRY domain in the interval 533–702 (SEVAWFAFDP…LHTGLPVPDF (170 aa)).

The protein belongs to the TRIM/RBCC family. As to quaternary structure, interacts with SNAP25. In terms of processing, auto-ubiquitinated. Poly-ubiquitinated in cultured cells, whereas it is monoubiquitinated in vitro. As to expression, brain. Highly expressed in the cerebral cortex (at protein level). Severely decreased in the affected brain areas in Parkinson disease and dementia with Lewy bodies.

The protein localises to the cytoplasm. Its subcellular location is the cell projection. It localises to the dendrite. The protein resides in the cytoplasmic vesicle. It is found in the secretory vesicle. The protein localises to the synaptic vesicle. Its subcellular location is the synapse. It localises to the cytoskeleton. It catalyses the reaction S-ubiquitinyl-[E2 ubiquitin-conjugating enzyme]-L-cysteine + [acceptor protein]-L-lysine = [E2 ubiquitin-conjugating enzyme]-L-cysteine + N(6)-ubiquitinyl-[acceptor protein]-L-lysine.. It functions in the pathway protein modification; protein ubiquitination. E3 ubiquitin-protein ligase which ubiquitinates itself in cooperation with an E2 enzyme UBE2D2/UBC4 and serves as a targeting signal for proteasomal degradation. May play a role in regulation of neuronal functions and may also participate in the formation or breakdown of abnormal inclusions in neurodegenerative disorders. May act as a regulator of synaptic vesicle exocytosis by controlling the availability of SNAP25 for the SNARE complex formation. This chain is E3 ubiquitin-protein ligase TRIM9 (TRIM9), found in Homo sapiens (Human).